Reading from the N-terminus, the 429-residue chain is Serine--tRNA ligase (429 aa).

236–238 provides a ligand contact to L-serine; it reads TAE. Residue 267-269 coordinates ATP; that stretch reads RRE. E290 lines the L-serine pocket. Residue 354–357 participates in ATP binding; the sequence is EISS. L-serine is bound at residue S390.

This sequence belongs to the class-II aminoacyl-tRNA synthetase family. Type-1 seryl-tRNA synthetase subfamily. Homodimer. The tRNA molecule binds across the dimer.

It localises to the cytoplasm. It carries out the reaction tRNA(Ser) + L-serine + ATP = L-seryl-tRNA(Ser) + AMP + diphosphate + H(+). It catalyses the reaction tRNA(Sec) + L-serine + ATP = L-seryl-tRNA(Sec) + AMP + diphosphate + H(+). The protein operates within aminoacyl-tRNA biosynthesis; selenocysteinyl-tRNA(Sec) biosynthesis; L-seryl-tRNA(Sec) from L-serine and tRNA(Sec): step 1/1. Functionally, catalyzes the attachment of serine to tRNA(Ser). Is also able to aminoacylate tRNA(Sec) with serine, to form the misacylated tRNA L-seryl-tRNA(Sec), which will be further converted into selenocysteinyl-tRNA(Sec). This Gloeobacter violaceus (strain ATCC 29082 / PCC 7421) protein is Serine--tRNA ligase.